The following is a 463-amino-acid chain: Cis-zeatin O-glucosyltransferase 2 (463 aa).

H21 functions as the Proton acceptor in the catalytic mechanism. 2 residues coordinate an anthocyanidin: H21 and N91. D127 (charge relay) is an active-site residue. Residues A339, Q341, H356, W359, N360, S361, E364, D380, and Q381 each contribute to the UDP-alpha-D-glucose site.

It belongs to the UDP-glycosyltransferase family. As to expression, highly expressed in root. Expressed at much lower level in kernel. Weakly or not expressed in expressed in stems and leaves.

The catalysed reaction is cis-zeatin + UDP-alpha-D-glucose = O-beta-D-glucosyl-cis-zeatin + UDP + H(+). In terms of biological role, utilizes UDP-glucose as the sugar donor and catalyzes the formation of O-beta-D-glucosyl-cis-zeatin from cis-zeatin. May regulate active versus storage forms of cytokinins and could have an impact on seed growth. The protein is Cis-zeatin O-glucosyltransferase 2 of Zea mays (Maize).